The chain runs to 139 residues: MKHGKVHRKLNRTAEHRKAMFANMCAALIKHEQIVTTLPKAKELRPIVEKLVTLGKKGGLDKRRQAIAEMRDIEQVKKLFDVLAPRYKDRNGGYTRIIKAGFRYGDNAAMAVIEFVDRDEDAKGRDSGPTQDNSEAEAA.

Residues 120–139 are disordered; it reads EDAKGRDSGPTQDNSEAEAA.

Part of the 50S ribosomal subunit. Contacts protein L32. May be methylated thrice, on undetermined residues.

The chain is Large ribosomal subunit protein bL17 from Rhodopseudomonas palustris (strain ATCC BAA-98 / CGA009).